The sequence spans 486 residues: Amyloid-beta A4 precursor protein-binding family B member 3 (486 aa).

The WW domain maps to 29 to 61 (TGLPPGWRKIRDAAGTYYWHVPSGSTQWQRPTW). PID domains lie at 113 to 280 (EPGA…QVEL) and 285 to 440 (SQAA…RTSS). Residues 438 to 460 (TSSMDSPGGPLPPPLLKGGAGGA) are disordered.

As to quaternary structure, interacts with APP (via intracellular domain). Interacts with APLP1 and APLP2 (via intracellular domain).

The protein localises to the cytoplasm. The protein resides in the nucleus. In terms of biological role, may modulate the internalization of amyloid-beta precursor protein. This Mus musculus (Mouse) protein is Amyloid-beta A4 precursor protein-binding family B member 3.